Here is a 225-residue protein sequence, read N- to C-terminus: UPF0758 protein SO_4248 (225 aa).

An MPN domain is found at 102–224; sequence VLTNPDLTRD…IVSFAERGWI (123 aa). Zn(2+) is bound by residues His-173, His-175, and Asp-186. A JAMM motif motif is present at residues 173–186; that stretch reads HNHPSGIAEPSQAD.

This sequence belongs to the UPF0758 family.

This chain is UPF0758 protein SO_4248, found in Shewanella oneidensis (strain ATCC 700550 / JCM 31522 / CIP 106686 / LMG 19005 / NCIMB 14063 / MR-1).